A 444-amino-acid chain; its full sequence is MTSLLFVILNIILTLHLCAGQTPAADNNKRLICYYDAQSYLRPGFAEMKLSFLKTAAEFCTHLIYGYADLNDDLYEISSLNVDLDMFHYKEITSLKAEFPHLRIYLSIGGDHDNGHYDAGKYMRFLESGKDRQNTFIESAIHLLKMNDFDGLDLAFKLPTNKPRKVHSEFGLLWKKFKKLFTGDFIVDPDAALHKQQYTEFVGNLARTFRNANLSLTMTVLPNVNSTWYFDVSEIYNNFEYINLFSFDFLTPLRNPEEADYTAPIYLRDEENRLAHYNIDYQMNYWVNHGCPAHKLNLGIATYGRAWKLSAKSGISCKPVVRETLGPAEPGLQSNISGLLSWPEICSKLAITNGAGYKGADAPVRKVQDLERLYGNYAFRPADDNDEHGIWISFDDPDFAGIKTNFVKTKFIGGVALYDLSYDDFRGLCTGVKFPILRSVRGHL.

Residues 1–20 (MTSLLFVILNIILTLHLCAG) form the signal peptide. The region spanning 29–444 (KRLICYYDAQ…PILRSVRGHL (416 aa)) is the GH18 domain. Cysteine 33 and cysteine 60 form a disulfide bridge. N-linked (GlcNAc...) asparagine glycosylation is found at asparagine 213, asparagine 225, and asparagine 335. Cysteine 346 and cysteine 429 are joined by a disulfide.

Belongs to the glycosyl hydrolase 18 family. IDGF subfamily. Post-translationally, glycosylated.

The protein resides in the secreted. Cooperates with insulin-like peptides to stimulate the proliferation, polarization and motility of imaginal disk cells. May act by stabilizing the binding of insulin-like peptides to its receptor through a simultaneous interaction with both molecules to form a multiprotein signaling complex. This Glossina morsitans morsitans (Savannah tsetse fly) protein is Chitinase-like protein Idgf1 (Idgf1).